A 476-amino-acid polypeptide reads, in one-letter code: Ureidoglycolate hydrolase (476 aa).

The first 25 residues, 1-25 (MESLKRFLCSIALLLISLLLPSSLA), serve as a signal peptide directing secretion. Residues His138, Asp149, Glu184, and His254 each contribute to the Mn(2+) site. Substrate contacts are provided by residues 183–184 (EE), 254–257 (HIEQ), His290, Asn340, Arg353, 423–424 (YH), and His448. Residues 276-391 (APASLKVEFE…LSEFKIVNQD (116 aa)) form an involved in dimerization region. Mn(2+) is bound at residue His448.

The protein belongs to the peptidase M20 family. As to quaternary structure, homodimer. Mn(2+) serves as cofactor. The cofactor is Ni(2+). Requires Co(2+) as cofactor.

It localises to the endoplasmic reticulum. It carries out the reaction (S)-ureidoglycolate + H2O + 2 H(+) = glyoxylate + 2 NH4(+) + CO2. It participates in nitrogen metabolism; (S)-allantoin degradation; glyoxylate from (S)-ureidoglycolate: step 1/1. Functionally, involved in the catabolism of purine nucleotides. Can use (S)-ureidoglycolate as substrate, but not (R)-ureidoglycolate or allantoate. The sequential activity of AAH, UGLYAH and UAH allows a complete purine breakdown without the intermediate generation of urea. This Arabidopsis thaliana (Mouse-ear cress) protein is Ureidoglycolate hydrolase.